The sequence spans 291 residues: 33 kDa chaperonin (291 aa).

2 disulfides stabilise this stretch: Cys-237–Cys-239 and Cys-270–Cys-273.

This sequence belongs to the HSP33 family. Under oxidizing conditions two disulfide bonds are formed involving the reactive cysteines. Under reducing conditions zinc is bound to the reactive cysteines and the protein is inactive.

The protein localises to the cytoplasm. Redox regulated molecular chaperone. Protects both thermally unfolding and oxidatively damaged proteins from irreversible aggregation. Plays an important role in the bacterial defense system toward oxidative stress. This chain is 33 kDa chaperonin, found in Bacillus cereus (strain B4264).